Consider the following 242-residue polypeptide: ATP synthase subunit a (242 aa).

The next 6 helical transmembrane spans lie at 29 to 49, 84 to 104, 114 to 134, 140 to 160, 181 to 201, and 206 to 226; these read SAVAMIFVSIAASMLLITAFV, FFPLILTLFLFISLGNILGMV, IIVTFSLAMIVFTTTLVYGIY, FFSLFLPKNIPLWLAPIMVII, VAGHILLKIIAWSIVSLTWLF, and IALVIVLIGFELFISILQAYI.

It belongs to the ATPase A chain family. In terms of assembly, F-type ATPases have 2 components, CF(1) - the catalytic core - and CF(0) - the membrane proton channel. CF(1) has five subunits: alpha(3), beta(3), gamma(1), delta(1), epsilon(1). CF(0) has three main subunits: a(1), b(2) and c(9-12). The alpha and beta chains form an alternating ring which encloses part of the gamma chain. CF(1) is attached to CF(0) by a central stalk formed by the gamma and epsilon chains, while a peripheral stalk is formed by the delta and b chains.

It is found in the cell inner membrane. Its function is as follows. Key component of the proton channel; it plays a direct role in the translocation of protons across the membrane. The sequence is that of ATP synthase subunit a from Orientia tsutsugamushi (strain Ikeda) (Rickettsia tsutsugamushi).